The sequence spans 658 residues: PTS system 2-O-alpha-mannosyl-D-glycerate-specific EIIABC component (658 aa).

Over Met-1 to Gly-313 the chain is Periplasmic. The region spanning Thr-25–Lys-171 is the PTS EIIA type-2 domain. His-87 acts as the Tele-phosphohistidine intermediate; for EIIA activity in catalysis. At His-87 the chain carries Phosphohistidine; by HPr. One can recognise a PTS EIIB type-2 domain in the interval Ile-186 to Thr-282. Catalysis depends on Cys-192, which acts as the Phosphocysteine intermediate; for EIIB activity. Cys-192 carries the post-translational modification Phosphocysteine; by EIIA. One can recognise a PTS EIIC type-2 domain in the interval Leu-306–Trp-641. The helical transmembrane segment at Ile-314–Leu-334 threads the bilayer. Topologically, residues Ser-335 to Gly-358 are cytoplasmic. Residues Gly-359–Ala-379 traverse the membrane as a helical segment. Residues Asp-380–Ala-389 lie on the Periplasmic side of the membrane. A helical membrane pass occupies residues Ala-390–Ile-410. Residues Ala-411–Thr-433 are Cytoplasmic-facing. A helical membrane pass occupies residues Phe-434–Gly-454. Over Glu-455–Ser-474 the chain is Periplasmic. Residues Asn-475–Val-495 traverse the membrane as a helical segment. At Asn-496–Tyr-500 the chain is on the cytoplasmic side. The helical transmembrane segment at Ala-501–Val-521 threads the bilayer. The Periplasmic portion of the chain corresponds to Lys-522 to Thr-551. Residues Trp-552–Leu-572 traverse the membrane as a helical segment. Position 573 (Arg-573) is a topological domain, cytoplasmic. Residues Val-574–Ile-594 form a helical membrane-spanning segment. Topologically, residues Gly-595 to Ala-620 are periplasmic. A helical membrane pass occupies residues Ile-621 to Trp-641. Over Arg-642–Pro-658 the chain is Cytoplasmic.

It is found in the cell inner membrane. It catalyses the reaction (2R)-2-O-(alpha-D-mannosyl)-glycerate(out) + N(pros)-phospho-L-histidyl-[protein] = (2R)-2-O-(6-phospho-alpha-D-mannosyl)-glycerate(in) + L-histidyl-[protein]. The phosphoenolpyruvate-dependent sugar phosphotransferase system (sugar PTS), a major carbohydrate active transport system, catalyzes the phosphorylation of incoming sugar substrates concomitantly with their translocation across the cell membrane. This system is involved in mannosyl-D-glycerate transport. Also involved in thermoinduction of ompC. In Escherichia coli (strain K12), this protein is PTS system 2-O-alpha-mannosyl-D-glycerate-specific EIIABC component.